The chain runs to 521 residues: Importin subunit alpha-3 (521 aa).

A2 is modified (N-acetylalanine). Residues 2-58 (ADNEKLDNQRLKNFKNKGRDLETMRRQRNEVVVELRKNKRDEHLLKRRNVPHEDICE) enclose the IBB domain. The short motif at 43 to 52 (EHLLKRRNVP) is the Nuclear localization signal element. S60 is modified (phosphoserine). The stretch at 66–106 (YRVQNTSLEAIVQNASSDNQGIQLSAVQAARKLLSSDRNPP) is one ARM 1; truncated repeat. ARM repeat units follow at residues 107–149 (IDDL…TSEQ), 150–194 (TQAV…CRDY), 195–233 (VISL…HKDP), 234–278 (PPPM…EQIQ), 279–318 (MVID…TDEQ), 319–360 (TQVV…NQQQ), 361–400 (VQAV…ISGR), and 401–443 (KDQV…KMAE). An NLS binding site (major) region spans residues 137-229 (WALTNIASGT…VTWVMVNLCR (93 aa)). Residues 306–394 (RAVGNIVTGT…QKEAAWAISN (89 aa)) are NLS binding site (minor). The stretch at 447–485 (ETIGNLIEECGGLEKIEQLQNHENEDIYKLAYEIIDQFF) is one ARM 10; atypical repeat.

The protein belongs to the importin alpha family. In terms of assembly, forms a complex with importin subunit beta-1 (KPNB1). Interacts with SNAI1. Interacts with TALDO1 isoform 1. Interacts with CYB1. As to quaternary structure, (Microbial infection) Interacts with MERS virus protein OF4b; this interaction prevents the translocation of NF-kappa-B complex to the nucleus. (Microbial infection) Interacts with human adenovirus 5 E1A protein; this interaction allows E1A import into the host nucleus. In terms of assembly, (Microbial infection) Interacts with Chikungunya virus capsid protein; this interaction allows the nuclear import of the viral capsid protein. Highly expressed in testis, ovary, small intestine, heart, skeletal muscle, lung and pancreas, but barely detectable in kidney, thymus, colon and peripheral blood leukocytes.

It localises to the cytoplasm. The protein resides in the nucleus. In terms of biological role, functions in nuclear protein import as an adapter protein for nuclear receptor KPNB1. Binds specifically and directly to substrates containing either a simple or bipartite NLS motif. Docking of the importin/substrate complex to the nuclear pore complex (NPC) is mediated by KPNB1 through binding to nucleoporin FxFG repeats and the complex is subsequently translocated through the pore by an energy requiring, Ran-dependent mechanism. At the nucleoplasmic side of the NPC, Ran binds to importin-beta and the three components separate and importin-alpha and -beta are re-exported from the nucleus to the cytoplasm where GTP hydrolysis releases Ran from importin. The directionality of nuclear import is thought to be conferred by an asymmetric distribution of the GTP- and GDP-bound forms of Ran between the cytoplasm and nucleus. Mediates nuclear import of AARS1, MRTFA and RANBP3. (Microbial infection) In vitro, mediates the nuclear import of human cytomegalovirus UL84 by recognizing a non-classical NLS. In vitro, mediates the nuclear import of human cytomegalovirus UL84 by recognizing a non-classical NLS. The protein is Importin subunit alpha-3 of Homo sapiens (Human).